We begin with the raw amino-acid sequence, 136 residues long: Histone H3 (136 aa).

The tract at residues 1–43 (MARTKQTARKSTGGKAPRKQLATKAARKSAPATGGVKKPHRYR) is disordered. K5 carries the post-translational modification N6-methylated lysine. Position 10 is an N6-acetyllysine; alternate (K10). K10 bears the N6-methylated lysine; alternate mark. S11 bears the Phosphoserine mark. 2 positions are modified to N6-acetyllysine: K15 and K24. Residues K28, K37, and K80 each carry the N6-methylated lysine modification.

This sequence belongs to the histone H3 family. In terms of assembly, the nucleosome is a histone octamer containing two molecules each of H2A, H2B, H3 and H4 assembled in one H3-H4 heterotetramer and two H2A-H2B heterodimers. The octamer wraps approximately 147 bp of DNA. Acetylation is generally linked to gene activation. Post-translationally, methylation at Lys-5 is linked to gene activation. Methylation at Lys-10 is linked to gene repression.

It is found in the nucleus. Its subcellular location is the chromosome. In terms of biological role, core component of nucleosome. Nucleosomes wrap and compact DNA into chromatin, limiting DNA accessibility to the cellular machineries which require DNA as a template. Histones thereby play a central role in transcription regulation, DNA repair, DNA replication and chromosomal stability. DNA accessibility is regulated via a complex set of post-translational modifications of histones, also called histone code, and nucleosome remodeling. The polypeptide is Histone H3 (Platynereis dumerilii (Dumeril's clam worm)).